Here is a 359-residue protein sequence, read N- to C-terminus: GTP cyclohydrolase FolE2 (359 aa).

This sequence belongs to the GTP cyclohydrolase IV family.

It catalyses the reaction GTP + H2O = 7,8-dihydroneopterin 3'-triphosphate + formate + H(+). The protein operates within cofactor biosynthesis; 7,8-dihydroneopterin triphosphate biosynthesis; 7,8-dihydroneopterin triphosphate from GTP: step 1/1. Its function is as follows. Converts GTP to 7,8-dihydroneopterin triphosphate. The sequence is that of GTP cyclohydrolase FolE2 from Cereibacter sphaeroides (strain ATCC 17025 / ATH 2.4.3) (Rhodobacter sphaeroides).